A 237-amino-acid chain; its full sequence is Octopine transport system permease protein OccQ (237 aa).

The ABC transmembrane type-1 domain occupies 22-222; the sequence is TAMTMAVAFS…LITFVSGQVF (201 aa). The next 4 helical transmembrane spans lie at 26–46, 72–92, 96–116, and 202–222; these read MAVA…GAAA, LVIY…ASLF, GFVG…VSGA, and SFYL…GQVF.

Belongs to the binding-protein-dependent transport system permease family. HisMQ subfamily.

The protein localises to the cell inner membrane. Component of the octopine active transport system probably consisting of four subunits: Q, M, P and T. The chain is Octopine transport system permease protein OccQ (occQ) from Agrobacterium tumefaciens (strain Ach5).